The following is a 369-amino-acid chain: Anhydro-N-acetylmuramic acid kinase (369 aa).

An ATP-binding site is contributed by 12–19; sequence GTSLDGVD.

Belongs to the anhydro-N-acetylmuramic acid kinase family.

The catalysed reaction is 1,6-anhydro-N-acetyl-beta-muramate + ATP + H2O = N-acetyl-D-muramate 6-phosphate + ADP + H(+). It functions in the pathway amino-sugar metabolism; 1,6-anhydro-N-acetylmuramate degradation. The protein operates within cell wall biogenesis; peptidoglycan recycling. In terms of biological role, catalyzes the specific phosphorylation of 1,6-anhydro-N-acetylmuramic acid (anhMurNAc) with the simultaneous cleavage of the 1,6-anhydro ring, generating MurNAc-6-P. Is required for the utilization of anhMurNAc either imported from the medium or derived from its own cell wall murein, and thus plays a role in cell wall recycling. This chain is Anhydro-N-acetylmuramic acid kinase, found in Escherichia coli O81 (strain ED1a).